Reading from the N-terminus, the 56-residue chain is Large ribosomal subunit protein bL32 (56 aa).

Belongs to the bacterial ribosomal protein bL32 family.

In Edwardsiella ictaluri (strain 93-146), this protein is Large ribosomal subunit protein bL32.